A 229-amino-acid chain; its full sequence is Aquaporin Z (229 aa).

The next 2 helical transmembrane spans lie at 8 to 28 (FLGT…AAGF) and 33 to 53 (IGFA…AYAI). Residues 62–64 (NPA) carry the NPA 1 motif. 3 consecutive transmembrane segments (helical) span residues 88 to 108 (VLGA…GAGF), 129 to 149 (LLAA…VIMG), and 158 to 178 (GFAP…SIPV). Positions 184–186 (NPA) match the NPA 2 motif. A helical membrane pass occupies residues 192–212 (ALFVGGWAVQQLWLFWLAPII).

The protein belongs to the MIP/aquaporin (TC 1.A.8) family. In terms of assembly, homotetramer.

The protein localises to the cell inner membrane. It catalyses the reaction H2O(in) = H2O(out). Its function is as follows. Channel that permits osmotically driven movement of water in both directions. It is involved in the osmoregulation and in the maintenance of cell turgor during volume expansion in rapidly growing cells. It mediates rapid entry or exit of water in response to abrupt changes in osmolarity. The protein is Aquaporin Z of Chromobacterium violaceum (strain ATCC 12472 / DSM 30191 / JCM 1249 / CCUG 213 / NBRC 12614 / NCIMB 9131 / NCTC 9757 / MK).